The sequence spans 54 residues: ILLLLIASAPSVDAQLKTKDDVPLASFHANVKRTLQKLLNKRCCQIVPQCCEWN.

An N-terminal signal peptide occupies residues 1 to 14 (ILLLLIASAPSVDA). A propeptide spanning residues 15–40 (QLKTKDDVPLASFHANVKRTLQKLLN) is cleaved from the precursor. E52 carries the post-translational modification 4-carboxyglutamate.

It belongs to the conotoxin T superfamily. Contains 2 disulfide bonds that can be either 'C1-C3, C2-C4' or 'C1-C4, C2-C3', since these disulfide connectivities have been observed for conotoxins with cysteine framework V (for examples, see AC P0DQQ7 and AC P81755). In terms of tissue distribution, expressed by the venom duct.

It is found in the secreted. In Conus marmoreus (Marble cone), this protein is Conotoxin mr5.4b.